We begin with the raw amino-acid sequence, 354 residues long: Glutamine synthetase cytosolic isozyme 1-3 (354 aa).

Ser-2 carries the N-acetylserine modification. Residues Ser-2 and Ser-48 each carry the phosphoserine modification. Residues Ile-19–Gly-99 form the GS beta-grasp domain. Residues Lys-106–Gly-354 enclose the GS catalytic domain.

This sequence belongs to the glutamine synthetase family. Homooctamer. As to expression, expressed in the pericycle in the region of mature root.

The protein resides in the cytoplasm. It catalyses the reaction L-glutamate + NH4(+) + ATP = L-glutamine + ADP + phosphate + H(+). Low-affinity glutamine synthetase. May contribute to the homeostatic control of glutamine synthesis in roots. In Arabidopsis thaliana (Mouse-ear cress), this protein is Glutamine synthetase cytosolic isozyme 1-3 (GLN1-3).